The primary structure comprises 102 residues: Small ribosomal subunit protein eS24 (102 aa).

Belongs to the eukaryotic ribosomal protein eS24 family.

The chain is Small ribosomal subunit protein eS24 from Methanobrevibacter smithii (strain ATCC 35061 / DSM 861 / OCM 144 / PS).